The primary structure comprises 214 residues: 3-isopropylmalate dehydratase small subunit (214 aa).

This sequence belongs to the LeuD family. LeuD type 1 subfamily. Heterodimer of LeuC and LeuD.

It carries out the reaction (2R,3S)-3-isopropylmalate = (2S)-2-isopropylmalate. Its pathway is amino-acid biosynthesis; L-leucine biosynthesis; L-leucine from 3-methyl-2-oxobutanoate: step 2/4. Its function is as follows. Catalyzes the isomerization between 2-isopropylmalate and 3-isopropylmalate, via the formation of 2-isopropylmaleate. In Pseudomonas putida (strain ATCC 47054 / DSM 6125 / CFBP 8728 / NCIMB 11950 / KT2440), this protein is 3-isopropylmalate dehydratase small subunit.